Reading from the N-terminus, the 103-residue chain is Large ribosomal subunit protein bL21 (103 aa).

This sequence belongs to the bacterial ribosomal protein bL21 family. As to quaternary structure, part of the 50S ribosomal subunit. Contacts protein L20.

Its function is as follows. This protein binds to 23S rRNA in the presence of protein L20. The sequence is that of Large ribosomal subunit protein bL21 from Yersinia enterocolitica serotype O:8 / biotype 1B (strain NCTC 13174 / 8081).